We begin with the raw amino-acid sequence, 146 residues long: uncharacterized protein (146 aa).

Residues 7 to 146 (LQINYKTDEL…EGHDILIWNP (140 aa)) enclose the N-acetyltransferase domain.

This is an uncharacterized protein from Staphylococcus epidermidis (strain ATCC 12228 / FDA PCI 1200).